The sequence spans 583 residues: 5-aminolevulinate synthase, erythroid-specific, mitochondrial (583 aa).

R158 contacts succinyl-CoA. Residues C253 and F254 each coordinate pyridoxal 5'-phosphate. Residues S275 and R294 each contribute to the succinyl-CoA site. 3 residues coordinate pyridoxal 5'-phosphate: S327, H355, and T383. K386 is a catalytic residue. At K386 the chain carries N6-(pyridoxal phosphate)lysine. T415 and T416 together coordinate pyridoxal 5'-phosphate. T503 is a binding site for succinyl-CoA.

It belongs to the class-II pyridoxal-phosphate-dependent aminotransferase family. In terms of assembly, homodimer. Requires pyridoxal 5'-phosphate as cofactor.

The protein localises to the mitochondrion inner membrane. It carries out the reaction succinyl-CoA + glycine + H(+) = 5-aminolevulinate + CO2 + CoA. The protein operates within porphyrin-containing compound metabolism; protoporphyrin-IX biosynthesis; 5-aminolevulinate from glycine: step 1/1. Catalyzes the pyridoxal 5'-phosphate (PLP)-dependent condensation of succinyl-CoA and glycine to form aminolevulinic acid (ALA), with CoA and CO2 as by-products. Contributes significantly to heme formation during erythropoiesis. The chain is 5-aminolevulinate synthase, erythroid-specific, mitochondrial (alas2) from Danio rerio (Zebrafish).